A 354-amino-acid chain; its full sequence is MKSLLLLVLISICGADHRSDNYTLDHDRVIHIQAENGPRLLVEAEQAKVFSHRGGNVTLPCKFLRDPTAFGSGTHKIRIKWTKLTSDYLKEVDVFVSMGYHKKTYGGYQGRVFLKGGSDNDASLVITDLTLDDYGRYKCEVIEGLEDDTAVVALDLQGVVFPYFPRLGRYNLNFHEAQQACLDQDAVIASFDQLYDAWRGGLDWCNAGWLSDGSVQYPITKPREPCGGQNTVPGVRNYGFWDKEKSRYDVFCFTSNFNGRFYYLIHPTKLTYDEAVQACLKDGAQIAKVGQIFAAWKLLGYDRCDAGWLADGSVRYPISRPRRRCSPTEAAVRFVGFPDKKHKLYGVYCFRAYN.

Positions 1 to 15 are excised as a propeptide; it reads MKSLLLLVLISICGA. Residues Asn21 and Asn56 are each glycosylated (N-linked (GlcNAc...) asparagine). Residues 38-152 enclose the Ig-like V-type domain; that stretch reads PRLLVEAEQA…EGLEDDTAVV (115 aa). Disulfide bonds link Cys61/Cys139, Cys181/Cys252, Cys205/Cys226, Cys279/Cys349, and Cys304/Cys325. 2 consecutive Link domains span residues 159–254 and 259–351; these read VVFP…FCFT and GRFY…YCFR.

Belongs to the HAPLN family.

The protein localises to the secreted. It is found in the extracellular space. Its subcellular location is the extracellular matrix. Stabilizes the aggregates of proteoglycan monomers with hyaluronic acid in the extracellular cartilage matrix. The chain is Hyaluronan and proteoglycan link protein 1 (HAPLN1) from Equus caballus (Horse).